A 159-amino-acid polypeptide reads, in one-letter code: Large ribosomal subunit protein uL10 (159 aa).

It belongs to the universal ribosomal protein uL10 family. In terms of assembly, part of the ribosomal stalk of the 50S ribosomal subunit. The N-terminus interacts with L11 and the large rRNA to form the base of the stalk. The C-terminus forms an elongated spine to which L12 dimers bind in a sequential fashion forming a multimeric L10(L12)X complex.

Its function is as follows. Forms part of the ribosomal stalk, playing a central role in the interaction of the ribosome with GTP-bound translation factors. In Sulfurimonas denitrificans (strain ATCC 33889 / DSM 1251) (Thiomicrospira denitrificans (strain ATCC 33889 / DSM 1251)), this protein is Large ribosomal subunit protein uL10.